We begin with the raw amino-acid sequence, 318 residues long: Retinol dehydrogenase 5 (318 aa).

The chain crosses the membrane as a helical span at residues 1–21 (MWLPLLLGALLWAVLWLLRDR). Over 22–288 (QSLPASNAFV…TRYSPGWDAK (267 aa)) the chain is Lumenal. 32–56 (FITGCDSGFGRLLALQLDQRGFRVL) is an NADP(+) binding site. The N-linked (GlcNAc...) asparagine glycan is linked to N160. Position 163 (S163) interacts with substrate. Y175 acts as the Proton acceptor in catalysis. A helical membrane pass occupies residues 289–309 (LLWLPASYLPASLVDAVLTWV). Residues 310 to 318 (LPKPAQAVY) are Cytoplasmic-facing.

The protein belongs to the short-chain dehydrogenases/reductases (SDR) family. In terms of assembly, homodimer. In terms of tissue distribution, widely expressed. In the eye, abundant in the retinal pigment epithelium.

It localises to the endoplasmic reticulum membrane. The enzyme catalyses 11-cis-retinol + NAD(+) = 11-cis-retinal + NADH + H(+). It catalyses the reaction 9-cis-retinol + NAD(+) = 9-cis-retinal + NADH + H(+). The catalysed reaction is 13-cis-retinol + NAD(+) = 13-cis-retinal + NADH + H(+). It carries out the reaction androsterone + NAD(+) = 5alpha-androstan-3,17-dione + NADH + H(+). The enzyme catalyses 5alpha-androstane-3alpha,17beta-diol + NAD(+) = 17beta-hydroxy-5alpha-androstan-3-one + NADH + H(+). The protein operates within cofactor metabolism; retinol metabolism. Inhibited by 9-cis-, 13-cis- and all-trans-retinoic acids, with the most potent inhibitor being 13-cis-retinoic acid. Weakly inhibited by oleic acid. Catalyzes the oxidation of cis-isomers of retinol, including 11-cis-, 9-cis-, and 13-cis-retinol in an NAD-dependent manner. Has no activity towards all-trans retinal. Plays a significant role in 11-cis retinol oxidation in the retinal pigment epithelium cells (RPE). Also recognizes steroids (androsterone, androstanediol) as its substrates. The chain is Retinol dehydrogenase 5 from Homo sapiens (Human).